The following is a 731-amino-acid chain: 1,4-alpha-glucan branching enzyme GlgB (731 aa).

Asp-408 (nucleophile) is an active-site residue. Residue Glu-461 is the Proton donor of the active site.

It belongs to the glycosyl hydrolase 13 family. GlgB subfamily. As to quaternary structure, monomer.

It catalyses the reaction Transfers a segment of a (1-&gt;4)-alpha-D-glucan chain to a primary hydroxy group in a similar glucan chain.. The protein operates within glycan biosynthesis; glycogen biosynthesis. Catalyzes the formation of the alpha-1,6-glucosidic linkages in glycogen by scission of a 1,4-alpha-linked oligosaccharide from growing alpha-1,4-glucan chains and the subsequent attachment of the oligosaccharide to the alpha-1,6 position. The protein is 1,4-alpha-glucan branching enzyme GlgB of Corynebacterium glutamicum (strain ATCC 13032 / DSM 20300 / JCM 1318 / BCRC 11384 / CCUG 27702 / LMG 3730 / NBRC 12168 / NCIMB 10025 / NRRL B-2784 / 534).